The primary structure comprises 416 residues: UDP-N-acetylglucosamine 1-carboxyvinyltransferase (416 aa).

Lysine 22 to asparagine 23 lines the phosphoenolpyruvate pocket. A UDP-N-acetyl-alpha-D-glucosamine-binding site is contributed by arginine 92. Cysteine 116 (proton donor) is an active-site residue. At cysteine 116 the chain carries 2-(S-cysteinyl)pyruvic acid O-phosphothioketal. Residues arginine 121 to glutamine 125, aspartate 304, and isoleucine 326 contribute to the UDP-N-acetyl-alpha-D-glucosamine site.

The protein belongs to the EPSP synthase family. MurA subfamily.

Its subcellular location is the cytoplasm. It carries out the reaction phosphoenolpyruvate + UDP-N-acetyl-alpha-D-glucosamine = UDP-N-acetyl-3-O-(1-carboxyvinyl)-alpha-D-glucosamine + phosphate. It participates in cell wall biogenesis; peptidoglycan biosynthesis. Its function is as follows. Cell wall formation. Adds enolpyruvyl to UDP-N-acetylglucosamine. This chain is UDP-N-acetylglucosamine 1-carboxyvinyltransferase, found in Cupriavidus necator (strain ATCC 17699 / DSM 428 / KCTC 22496 / NCIMB 10442 / H16 / Stanier 337) (Ralstonia eutropha).